Here is a 473-residue protein sequence, read N- to C-terminus: BPI fold-containing family B member 3 (473 aa).

Positions 1–20 (MMPGVYALLLLWGLATPCLG) are cleaved as a signal peptide. The N-linked (GlcNAc...) asparagine glycan is linked to N139. C161 and C196 are joined by a disulfide.

The protein belongs to the BPI/LBP/Plunc superfamily. BPI/LBP family. Highly expressed in olfactory mucosa but undetectable in thymus, kidney, lung, brain, spleen and liver.

The protein localises to the secreted. Functionally, may have the capacity to recognize and bind specific classes of odorants. May act as a carrier molecule, transporting odorants across the mucus layer to access receptor sites. May serve as a primary defense mechanism by recognizing and removing potentially harmful odorants or pathogenic microorganisms from the mucosa or clearing excess odorant from mucus to enable new odorant stimuli to be received. In Rattus norvegicus (Rat), this protein is BPI fold-containing family B member 3.